The primary structure comprises 168 residues: Large ribosomal subunit protein uL10 (168 aa).

The protein belongs to the universal ribosomal protein uL10 family. Part of the ribosomal stalk of the 50S ribosomal subunit. The N-terminus interacts with L11 and the large rRNA to form the base of the stalk. The C-terminus forms an elongated spine to which L12 dimers bind in a sequential fashion forming a multimeric L10(L12)X complex.

In terms of biological role, forms part of the ribosomal stalk, playing a central role in the interaction of the ribosome with GTP-bound translation factors. This is Large ribosomal subunit protein uL10 from Acinetobacter baylyi (strain ATCC 33305 / BD413 / ADP1).